We begin with the raw amino-acid sequence, 361 residues long: sn-glycerol-3-phosphate import ATP-binding protein UgpC (361 aa).

The 232-residue stretch at 4-235 folds into the ABC transporter domain; that stretch reads LSLKGVRKSY…PATVFVAGFI (232 aa). 37 to 44 is an ATP binding site; the sequence is GPSGCGKS.

This sequence belongs to the ABC transporter superfamily. sn-glycerol-3-phosphate importer (TC 3.A.1.1.3) family. As to quaternary structure, the complex is composed of two ATP-binding proteins (UgpC), two transmembrane proteins (UgpA and UgpE) and a solute-binding protein (UgpB).

Its subcellular location is the cell inner membrane. It catalyses the reaction sn-glycerol 3-phosphate(out) + ATP + H2O = sn-glycerol 3-phosphate(in) + ADP + phosphate + H(+). Part of the ABC transporter complex UgpBAEC involved in sn-glycerol-3-phosphate (G3P) import. Responsible for energy coupling to the transport system. This chain is sn-glycerol-3-phosphate import ATP-binding protein UgpC, found in Burkholderia lata (strain ATCC 17760 / DSM 23089 / LMG 22485 / NCIMB 9086 / R18194 / 383).